The sequence spans 439 residues: Microfibrillar-associated protein 1A (439 aa).

Residues 1-200 (MSVPSALMKQ…SEDEMEPRLK (200 aa)) are disordered. Ser-2 bears the N-acetylserine mark. The span at 23–34 (RNEKGEISMEKV) shows a compositional bias: basic and acidic residues. A phosphoserine mark is found at Ser-52 and Ser-53. The span at 61 to 70 (QFIKKAKEQE) shows a compositional bias: basic and acidic residues. Lys-67 participates in a covalent cross-link: Glycyl lysine isopeptide (Lys-Gly) (interchain with G-Cter in SUMO2). Residues 71-81 (AEPEEQEEDSS) are compositionally biased toward acidic residues. A phosphoserine mark is found at Ser-94, Ser-116, Ser-118, Ser-132, and Ser-133. Acidic residues-rich tracts occupy residues 112–122 (VVGESDSEVEG) and 131–144 (DSSE…DDEE). Basic and acidic residues predominate over residues 145-163 (IERRRGMMRQRAQERKNEE). Positions 178 to 195 (ESESESEYEEYTDSEDEM) are enriched in acidic residues. Residue Lys-249 forms a Glycyl lysine isopeptide (Lys-Gly) (interchain with G-Cter in SUMO2) linkage. A Phosphothreonine modification is found at Thr-267. A Glycyl lysine isopeptide (Lys-Gly) (interchain with G-Cter in SUMO2) cross-link involves residue Lys-357. The residue at position 361 (Ser-361) is a Phosphoserine. Glycyl lysine isopeptide (Lys-Gly) (interchain with G-Cter in SUMO2) cross-links involve residues Lys-371, Lys-381, Lys-415, and Lys-418. Position 432 is a phosphoserine (Ser-432).

Belongs to the MFAP1 family. In terms of assembly, component of the spliceosome B complex. Interacts with PRPF38A (via N-terminal interaction domain).

Its subcellular location is the nucleus. Involved in pre-mRNA splicing as a component of the spliceosome. The protein is Microfibrillar-associated protein 1A of Mus musculus (Mouse).